The sequence spans 333 residues: Ketol-acid reductoisomerase (NADP(+)) (333 aa).

A KARI N-terminal Rossmann domain is found at Met-1–Thr-179. NADP(+) is bound by residues Tyr-22 to Gln-25, Lys-45, Ser-48, Ser-50, and Asp-80 to Gln-83. His-105 is a catalytic residue. NADP(+) is bound at residue Gly-131. The 146-residue stretch at Thr-180–Val-325 folds into the KARI C-terminal knotted domain. 4 residues coordinate Mg(2+): Asp-188, Glu-192, Glu-224, and Glu-228. Ser-249 lines the substrate pocket.

The protein belongs to the ketol-acid reductoisomerase family. Mg(2+) is required as a cofactor.

The enzyme catalyses (2R)-2,3-dihydroxy-3-methylbutanoate + NADP(+) = (2S)-2-acetolactate + NADPH + H(+). It carries out the reaction (2R,3R)-2,3-dihydroxy-3-methylpentanoate + NADP(+) = (S)-2-ethyl-2-hydroxy-3-oxobutanoate + NADPH + H(+). Its pathway is amino-acid biosynthesis; L-isoleucine biosynthesis; L-isoleucine from 2-oxobutanoate: step 2/4. It functions in the pathway amino-acid biosynthesis; L-valine biosynthesis; L-valine from pyruvate: step 2/4. Its function is as follows. Involved in the biosynthesis of branched-chain amino acids (BCAA). Catalyzes an alkyl-migration followed by a ketol-acid reduction of (S)-2-acetolactate (S2AL) to yield (R)-2,3-dihydroxy-isovalerate. In the isomerase reaction, S2AL is rearranged via a Mg-dependent methyl migration to produce 3-hydroxy-3-methyl-2-ketobutyrate (HMKB). In the reductase reaction, this 2-ketoacid undergoes a metal-dependent reduction by NADPH to yield (R)-2,3-dihydroxy-isovalerate. In Mycobacterium avium, this protein is Ketol-acid reductoisomerase (NADP(+)).